An 84-amino-acid chain; its full sequence is Neurotoxin BmK-M10 (84 aa).

The first 19 residues, 1–19 (MNYLVMISFALLLMKGVES), serve as a signal peptide directing secretion. Residues 21–83 (RDAYIAKPEN…VPIRVPGKCQ (63 aa)) form the LCN-type CS-alpha/beta domain. 4 cysteine pairs are disulfide-bonded: cysteine 31/cysteine 82, cysteine 35/cysteine 55, cysteine 41/cysteine 65, and cysteine 45/cysteine 67. Arginine 84 is a propeptide (removed by a carboxypeptidase).

Expressed by the venom gland.

It localises to the secreted. In terms of biological role, binds to voltage-dependent sodium channels (Nav) and voltage-dependent delayed rectifier potassium channels and inhibits the inactivation of the activated channels, thereby blocking neuronal transmission. Administration to mice at a dosage of 0.8 mg/kg produces an analgesic effect. The sequence is that of Neurotoxin BmK-M10 from Olivierus martensii (Manchurian scorpion).